We begin with the raw amino-acid sequence, 190 residues long: Peptidyl-tRNA hydrolase (190 aa).

Tyr-14 lines the tRNA pocket. His-19 acts as the Proton acceptor in catalysis. TRNA contacts are provided by Tyr-64, Asn-66, and Asn-112.

The protein belongs to the PTH family. In terms of assembly, monomer.

Its subcellular location is the cytoplasm. It carries out the reaction an N-acyl-L-alpha-aminoacyl-tRNA + H2O = an N-acyl-L-amino acid + a tRNA + H(+). Hydrolyzes ribosome-free peptidyl-tRNAs (with 1 or more amino acids incorporated), which drop off the ribosome during protein synthesis, or as a result of ribosome stalling. In terms of biological role, catalyzes the release of premature peptidyl moieties from peptidyl-tRNA molecules trapped in stalled 50S ribosomal subunits, and thus maintains levels of free tRNAs and 50S ribosomes. This is Peptidyl-tRNA hydrolase from Chlorobium phaeobacteroides (strain DSM 266 / SMG 266 / 2430).